The primary structure comprises 523 residues: Nuclear receptor ROR-alpha (523 aa).

Low complexity predominate over residues 1-26; that stretch reads MESAPAAPDPAASEPGSSGADAAAGS. The tract at residues 1–63 is disordered; it reads MESAPAAPDP…SRGISVTKKT (63 aa). An N6-methyllysine modification is found at Lys-38. The span at 48-57 shows a compositional bias: polar residues; it reads QSYSSTSRGI. 2 consecutive NR C4-type zinc fingers follow at residues 73 to 93 and 109 to 133; these read CKICGDKSSGIHYGVITCEGC and CPRQKNCLIDRTSRNRCQHCRLQKC. A DNA-binding region (nuclear receptor) is located at residues 73–138; that stretch reads CKICGDKSSG…RLQKCLAVGM (66 aa). The tract at residues 154–183 is disordered; that stretch reads DSLYAEVQKHRMQQQQRDHQQQPGEAEPLT. The residue at position 183 (Thr-183) is a Phosphothreonine; by MAPK1. Lys-240 participates in a covalent cross-link: Glycyl lysine isopeptide (Lys-Gly) (interchain with G-Cter in SUMO). The NR LBD domain occupies 272–510; the sequence is ELEHLAQNIS…LHFPPLYKEL (239 aa). The AF-2 signature appears at 506-523; it reads LYKELFTSEFEPAMQIDG.

It belongs to the nuclear hormone receptor family. NR1 subfamily. In terms of assembly, monomer. Interacts (via the DNA-binding domain) with HIF1A; the interaction enhances HIF1A transcription under hypoxia through increasing protein stability. Interacts with CEBPB; the interaction disrupts the interaction CEBPB:EP300. Interacts with the coactivators NCOA2, PPARGC1A (via LXXLL motif), EP300 and MED1. Interacts with the corepressor NCOR1. Interacts with MAGED1 and CTNNB1. Interacts with CRY1 and PER2. Interacts (via AF-2 motif) with PROX1. Interacts with NRIP1. Isoform 4 interacts (via AF-2 motif) with isoform 1 of FOXP3 (via LXXLL motif). In terms of processing, phosphorylation by conventional PKCs in neurons inhibits transcriptional activity. Phosphorylated on Thr-183 by MAPK1/ERK1 in vitro. Sumoylated by SENP1 and SENP2. Sumoylation, promoted by PIAS2, PIAS3, PIAS4 but not PIAS1, enhances the transcriptional activity. Desumoylated by SENP1. Post-translationally, ubiquitinated, leading to its degradation by the proteasome. Proteasomal degradation is required for efficient transcriptional activity and is prevented by HR. In terms of processing, monomethylated at Lys-38 by EZH2, this creates a degron recognized by a DCX (DDB1-DCAF1/VPRBP-CUL4A-RBX1) E3 ubiquitin ligase complex. As to expression, widely expressed in a number of tissues. Expressed in both regulatory T-cells (Treg) and effector T-cells (Teff). Isoform 4: Highly expressed in the central nervous system, including in the cerebellum.

Its subcellular location is the nucleus. Nuclear receptor that binds DNA as a monomer to ROR response elements (RORE) containing a single core motif half-site 5'-AGGTCA-3' preceded by a short A-T-rich sequence. Key regulator of embryonic development, cellular differentiation, immunity, circadian rhythm as well as lipid, steroid, xenobiotics and glucose metabolism. Considered to have intrinsic transcriptional activity, have some natural ligands like oxysterols that act as agonists (25-hydroxycholesterol) or inverse agonists (7-oxygenated sterols), enhancing or repressing the transcriptional activity, respectively. Recruits distinct combinations of cofactors to target genes regulatory regions to modulate their transcriptional expression, depending on the tissue, time and promoter contexts. Regulates genes involved in photoreceptor development including OPN1SW, OPN1SM and ARR3 and skeletal muscle development with MYOD1. Required for proper cerebellum development. Regulates SHH gene expression, among others, to induce granule cells proliferation as well as expression of genes involved in calcium-mediated signal transduction. Regulates the circadian expression of several clock genes, including CLOCK, BMAL1, NPAS2 and CRY1. Competes with NR1D1 for binding to their shared DNA response element on some clock genes such as BMAL1, CRY1 and NR1D1 itself, resulting in NR1D1-mediated repression or RORA-mediated activation of clock genes expression, leading to the circadian pattern of clock genes expression. Therefore influences the period length and stability of the clock. Regulates genes involved in lipid metabolism such as apolipoproteins APOA1, APOA5, APOC3 and PPARG. In liver, has specific and redundant functions with RORC as positive or negative modulator of expression of genes encoding phase I and phase II proteins involved in the metabolism of lipids, steroids and xenobiotics, such as CYP7B1 and SULT2A1. Induces a rhythmic expression of some of these genes. In addition, interplays functionally with NR1H2 and NR1H3 for the regulation of genes involved in cholesterol metabolism. Also involved in the regulation of hepatic glucose metabolism through the modulation of G6PC1 and PCK1. In adipose tissue, plays a role as negative regulator of adipocyte differentiation, probably acting through dual mechanisms. May suppress CEBPB-dependent adipogenesis through direct interaction and PPARG-dependent adipogenesis through competition for DNA-binding. Downstream of IL6 and TGFB and synergistically with RORC isoform 2, is implicated in the lineage specification of uncommitted CD4(+) T-helper (T(H)) cells into T(H)17 cells, antagonizing the T(H)1 program. Probably regulates IL17 and IL17F expression on T(H) by binding to the essential enhancer conserved non-coding sequence 2 (CNS2) in the IL17-IL17F locus. Involved in hypoxia signaling by interacting with and activating the transcriptional activity of HIF1A. May inhibit cell growth in response to cellular stress. May exert an anti-inflammatory role by inducing CHUK expression and inhibiting NF-kappa-B signaling. The protein is Nuclear receptor ROR-alpha (RORA) of Homo sapiens (Human).